The primary structure comprises 520 residues: Bifunctional purine biosynthesis protein PurH (520 aa).

In terms of domain architecture, MGS-like spans 1-147 (MAKIGRALIS…KNNRDVTVVV (147 aa)).

This sequence belongs to the PurH family.

The catalysed reaction is (6R)-10-formyltetrahydrofolate + 5-amino-1-(5-phospho-beta-D-ribosyl)imidazole-4-carboxamide = 5-formamido-1-(5-phospho-D-ribosyl)imidazole-4-carboxamide + (6S)-5,6,7,8-tetrahydrofolate. It catalyses the reaction IMP + H2O = 5-formamido-1-(5-phospho-D-ribosyl)imidazole-4-carboxamide. The protein operates within purine metabolism; IMP biosynthesis via de novo pathway; 5-formamido-1-(5-phospho-D-ribosyl)imidazole-4-carboxamide from 5-amino-1-(5-phospho-D-ribosyl)imidazole-4-carboxamide (10-formyl THF route): step 1/1. It functions in the pathway purine metabolism; IMP biosynthesis via de novo pathway; IMP from 5-formamido-1-(5-phospho-D-ribosyl)imidazole-4-carboxamide: step 1/1. This chain is Bifunctional purine biosynthesis protein PurH, found in Citrifermentans bemidjiense (strain ATCC BAA-1014 / DSM 16622 / JCM 12645 / Bem) (Geobacter bemidjiensis).